The sequence spans 205 residues: Imidazoleglycerol-phosphate dehydratase (205 aa).

Belongs to the imidazoleglycerol-phosphate dehydratase family.

The enzyme catalyses D-erythro-1-(imidazol-4-yl)glycerol 3-phosphate = 3-(imidazol-4-yl)-2-oxopropyl phosphate + H2O. The protein operates within amino-acid biosynthesis; L-histidine biosynthesis; L-histidine from 5-phospho-alpha-D-ribose 1-diphosphate: step 6/9. This Phaffia rhodozyma (Yeast) protein is Imidazoleglycerol-phosphate dehydratase (HIS3).